The chain runs to 395 residues: Teichoic acid D-alanyltransferase (395 aa).

The Extracellular segment spans residues 1–6 (MTPYSS). A helical membrane pass occupies residues 7–26 (FLFFILLGILLLPTIILGLN). Over 27–30 (GKRF) the chain is Cytoplasmic. The helical transmembrane segment at 31–46 (QAYNMFISIIILALIF) threads the bilayer. The Extracellular portion of the chain corresponds to 47-50 (SHDL). The chain crosses the membrane as a helical span at residues 51–76 (HGVIALCLFTIWQVLLISGYLAYRQK). At 77 to 79 (ANS) the chain is on the cytoplasmic side. Residues 80–104 (GFVFCGAVIASILPLFLSKIWPFLS) traverse the membrane as a helical segment. Residues 105–120 (HPQPHHPPHNLISFLG) lie on the Extracellular side of the membrane. A helical membrane pass occupies residues 121 to 137 (ISYLTFKGVQLIMEARD). Topologically, residues 138 to 145 (GLLKEQLP) are cytoplasmic. An intramembrane segment occupies 146–175 (LHRLLYFILFFPTISSGPIDRYRRFVKDEQ). At 176-179 (KAWT) the chain is on the cytoplasmic side. A helical transmembrane segment spans residues 180–223 (KEEYADLLYTGIHKIFIGFLYKFIIGYAINTYFIMNLPAITHNK). Position 224 (isoleucine 224) is a topological domain, extracellular. Residues 225 to 256 (LGNLLYMYGYSMYLFFDFAGYTMFAVGVSYIM) form a helical membrane-spanning segment. Residues 257–266 (GIKSPENFNK) are Cytoplasmic-facing. An intramembrane segment occupies 267-303 (PFISKNIKDFWNRWHMSLSFWFRDYVFMRFVFWMTKK). The Cytoplasmic portion of the chain corresponds to 304–308 (KWIKN). The chain crosses the membrane as a helical span at residues 309 to 328 (RMAVSNIGYFLLFMLMGVWH). Histidine 328 is a catalytic residue. The Extracellular segment spans residues 329–333 (GLAPQ). A helical membrane pass occupies residues 334-351 (YIIYGLYHAVLMTCYNFF). At 352-364 (EKWNKKYKWLPSN) the chain is on the cytoplasmic side. A helical membrane pass occupies residues 365 to 387 (RWTTILAIVITFHFVCFGFYIFS). Over 388–395 (GKPFHHHH) the chain is Extracellular.

Belongs to the membrane-bound acyltransferase family.

It localises to the cell membrane. It functions in the pathway cell wall biogenesis; lipoteichoic acid biosynthesis. O-acyltransferase that catalyzes D-alanylation of both teichoic acid and lipoteichoic acid (LTA). D-alanylation of LTA plays an important role in modulating the properties of the cell wall in Gram-positive bacteria, influencing the net charge of the cell wall. Catalyzes D-alanylation from DltC carrier protein. The chain is Teichoic acid D-alanyltransferase from Bacillus subtilis (strain 168).